Reading from the N-terminus, the 491-residue chain is Ketol-acid reductoisomerase (NADP(+)) (491 aa).

The KARI N-terminal Rossmann domain occupies 15-208 (AQLGKCRFMG…GGHRAGVLES (194 aa)). Residues 45 to 48 (CGAQ), arginine 68, arginine 76, serine 78, and 108 to 110 (DKQ) contribute to the NADP(+) site. Histidine 132 is a catalytic residue. Glycine 158 is an NADP(+) binding site. 2 KARI C-terminal knotted domains span residues 209–344 (SFVA…TAPQ) and 345–484 (YEGK…MTDM). Mg(2+) contacts are provided by aspartate 217, glutamate 221, glutamate 389, and glutamate 393. Residue serine 414 participates in substrate binding.

This sequence belongs to the ketol-acid reductoisomerase family. The cofactor is Mg(2+).

It carries out the reaction (2R)-2,3-dihydroxy-3-methylbutanoate + NADP(+) = (2S)-2-acetolactate + NADPH + H(+). The catalysed reaction is (2R,3R)-2,3-dihydroxy-3-methylpentanoate + NADP(+) = (S)-2-ethyl-2-hydroxy-3-oxobutanoate + NADPH + H(+). The protein operates within amino-acid biosynthesis; L-isoleucine biosynthesis; L-isoleucine from 2-oxobutanoate: step 2/4. It functions in the pathway amino-acid biosynthesis; L-valine biosynthesis; L-valine from pyruvate: step 2/4. In terms of biological role, involved in the biosynthesis of branched-chain amino acids (BCAA). Catalyzes an alkyl-migration followed by a ketol-acid reduction of (S)-2-acetolactate (S2AL) to yield (R)-2,3-dihydroxy-isovalerate. In the isomerase reaction, S2AL is rearranged via a Mg-dependent methyl migration to produce 3-hydroxy-3-methyl-2-ketobutyrate (HMKB). In the reductase reaction, this 2-ketoacid undergoes a metal-dependent reduction by NADPH to yield (R)-2,3-dihydroxy-isovalerate. This Escherichia coli O157:H7 protein is Ketol-acid reductoisomerase (NADP(+)).